The following is a 227-amino-acid chain: ATP synthase F(0) complex subunit a (227 aa).

The next 6 membrane-spanning stretches (helical) occupy residues 14–34 (FLGI…IPTP), 73–93 (LASL…PYIF), 98–118 (QLSL…LIGM), 137–157 (ALIP…PLAL), 179–199 (VFVL…LLLL), and 203–223 (LEVA…SLYL).

This sequence belongs to the ATPase A chain family. As to quaternary structure, component of the ATP synthase complex composed at least of ATP5F1A/subunit alpha, ATP5F1B/subunit beta, ATP5MC1/subunit c (homooctomer), MT-ATP6/subunit a, MT-ATP8/subunit 8, ATP5ME/subunit e, ATP5MF/subunit f, ATP5MG/subunit g, ATP5MK/subunit k, ATP5MJ/subunit j, ATP5F1C/subunit gamma, ATP5F1D/subunit delta, ATP5F1E/subunit epsilon, ATP5PF/subunit F6, ATP5PB/subunit b, ATP5PD/subunit d, ATP5PO/subunit OSCP. ATP synthase complex consists of a soluble F(1) head domain (subunits alpha(3) and beta(3)) - the catalytic core - and a membrane F(0) domain - the membrane proton channel (subunits c, a, 8, e, f, g, k and j). These two domains are linked by a central stalk (subunits gamma, delta, and epsilon) rotating inside the F1 region and a stationary peripheral stalk (subunits F6, b, d, and OSCP). Interacts with DNAJC30; interaction is direct.

Its subcellular location is the mitochondrion inner membrane. The enzyme catalyses H(+)(in) = H(+)(out). Subunit a, of the mitochondrial membrane ATP synthase complex (F(1)F(0) ATP synthase or Complex V) that produces ATP from ADP in the presence of a proton gradient across the membrane which is generated by electron transport complexes of the respiratory chain. ATP synthase complex consist of a soluble F(1) head domain - the catalytic core - and a membrane F(1) domain - the membrane proton channel. These two domains are linked by a central stalk rotating inside the F(1) region and a stationary peripheral stalk. During catalysis, ATP synthesis in the catalytic domain of F(1) is coupled via a rotary mechanism of the central stalk subunits to proton translocation. With the subunit c (ATP5MC1), forms the proton-conducting channel in the F(0) domain, that contains two crucial half-channels (inlet and outlet) that facilitate proton movement from the mitochondrial intermembrane space (IMS) into the matrix. Protons are taken up via the inlet half-channel and released through the outlet half-channel, following a Grotthuss mechanism. In Gadus morhua (Atlantic cod), this protein is ATP synthase F(0) complex subunit a.